The primary structure comprises 38 residues: NLYQFGNMIKCTIPKRLSWRSFVDYGCYCGKGGSGTPV.

Ca(2+) contacts are provided by tyrosine 28, glycine 30, and glycine 32.

The protein belongs to the phospholipase A2 family. Group I subfamily. Ca(2+) serves as cofactor. Expressed by the venom gland.

Its subcellular location is the secreted. The enzyme catalyses a 1,2-diacyl-sn-glycero-3-phosphocholine + H2O = a 1-acyl-sn-glycero-3-phosphocholine + a fatty acid + H(+). Functionally, snake venom phospholipase A2 (PLA2) that inhibits neuromuscular transmission by blocking acetylcholine release from the nerve termini. PLA2 catalyzes the calcium-dependent hydrolysis of the 2-acyl groups in 3-sn-phosphoglycerides. The protein is Phospholipase A2 2 of Calliophis bivirgatus (Blue Malaysian coral snake).